Consider the following 158-residue polypeptide: 6,7-dimethyl-8-ribityllumazine synthase (158 aa).

5-amino-6-(D-ribitylamino)uracil contacts are provided by residues Phe22, 57-59 (AVE), and 81-83 (AVI). 86–87 (GT) provides a ligand contact to (2S)-2-hydroxy-3-oxobutyl phosphate. His89 functions as the Proton donor in the catalytic mechanism. Phe114 lines the 5-amino-6-(D-ribitylamino)uracil pocket. Arg128 contacts (2S)-2-hydroxy-3-oxobutyl phosphate.

This sequence belongs to the DMRL synthase family. As to quaternary structure, forms an icosahedral capsid composed of 60 subunits, arranged as a dodecamer of pentamers.

It carries out the reaction (2S)-2-hydroxy-3-oxobutyl phosphate + 5-amino-6-(D-ribitylamino)uracil = 6,7-dimethyl-8-(1-D-ribityl)lumazine + phosphate + 2 H2O + H(+). Its pathway is cofactor biosynthesis; riboflavin biosynthesis; riboflavin from 2-hydroxy-3-oxobutyl phosphate and 5-amino-6-(D-ribitylamino)uracil: step 1/2. In terms of biological role, catalyzes the formation of 6,7-dimethyl-8-ribityllumazine by condensation of 5-amino-6-(D-ribitylamino)uracil with 3,4-dihydroxy-2-butanone 4-phosphate. This is the penultimate step in the biosynthesis of riboflavin. This is 6,7-dimethyl-8-ribityllumazine synthase from Shewanella piezotolerans (strain WP3 / JCM 13877).